Consider the following 319-residue polypeptide: Pantothenate kinase (319 aa).

G97–S104 serves as a coordination point for ATP.

This sequence belongs to the prokaryotic pantothenate kinase family.

Its subcellular location is the cytoplasm. The enzyme catalyses (R)-pantothenate + ATP = (R)-4'-phosphopantothenate + ADP + H(+). Its pathway is cofactor biosynthesis; coenzyme A biosynthesis; CoA from (R)-pantothenate: step 1/5. The protein is Pantothenate kinase of Mesorhizobium japonicum (strain LMG 29417 / CECT 9101 / MAFF 303099) (Mesorhizobium loti (strain MAFF 303099)).